Here is a 1509-residue protein sequence, read N- to C-terminus: DNA-directed RNA polymerase subunit beta' (1509 aa).

4 residues coordinate Zn(2+): cysteine 75, cysteine 77, cysteine 90, and cysteine 93. Positions 474, 476, and 478 each coordinate Mg(2+). Cysteine 804, cysteine 878, cysteine 885, and cysteine 888 together coordinate Zn(2+).

The protein belongs to the RNA polymerase beta' chain family. In terms of assembly, the RNAP catalytic core consists of 2 alpha, 1 beta, 1 beta' and 1 omega subunit. When a sigma factor is associated with the core the holoenzyme is formed, which can initiate transcription. The cofactor is Mg(2+). It depends on Zn(2+) as a cofactor.

The catalysed reaction is RNA(n) + a ribonucleoside 5'-triphosphate = RNA(n+1) + diphosphate. DNA-dependent RNA polymerase catalyzes the transcription of DNA into RNA using the four ribonucleoside triphosphates as substrates. The protein is DNA-directed RNA polymerase subunit beta' of Sulfurovum sp. (strain NBC37-1).